A 786-amino-acid chain; its full sequence is Endonuclease MutS2 (786 aa).

An ATP-binding site is contributed by glycine 335–threonine 342. The Smr domain maps to leucine 711–lysine 786.

Belongs to the DNA mismatch repair MutS family. MutS2 subfamily. Homodimer. Binds to stalled ribosomes, contacting rRNA.

Its function is as follows. Endonuclease that is involved in the suppression of homologous recombination and thus may have a key role in the control of bacterial genetic diversity. In terms of biological role, acts as a ribosome collision sensor, splitting the ribosome into its 2 subunits. Detects stalled/collided 70S ribosomes which it binds and splits by an ATP-hydrolysis driven conformational change. Acts upstream of the ribosome quality control system (RQC), a ribosome-associated complex that mediates the extraction of incompletely synthesized nascent chains from stalled ribosomes and their subsequent degradation. Probably generates substrates for RQC. The chain is Endonuclease MutS2 from Bacillus cereus (strain Q1).